The following is a 134-amino-acid chain: Protein dpy-30 homolog (134 aa).

A disordered region spans residues 1–81 (MEAKTDAPIS…ETNNMPTRQY (81 aa)). The segment covering 31–68 (AQANPTAAPGAPPSGAIAVGQSTNPVAQQQQQPAVAKK) has biased composition (low complexity). Residues 71–81 (SETNNMPTRQY) are compositionally biased toward polar residues.

It belongs to the dpy-30 family. Core component of several methyltransferase-containing complexes. Component of the SET1 complex, composed at least of the catalytic subunit Set1, wds/WDR5, Wdr82, Rbbp5, ash2, Cfp1/CXXC1, hcf and Dpy-30L1. Component of the MLL3/4 complex composed at least of the catalytic subunit trr, ash2, Rbbp5, Dpy-30L1, wds, hcf, ptip, Pa1, Utx, Lpt and Ncoa6. Expressed in larval brain, gonad, imaginal disk and salivary gland and in adult brain, testis, ovary and salivary gland.

The protein resides in the nucleus. Functionally, component of the SET1 complex that specifically di- and trimethylates 'Lys-4' of histone H3 and of the MLL3/4 complex which also methylates histone H3 'Lys-4'. Inhibits MTF-1 transcription factor activity. This Drosophila melanogaster (Fruit fly) protein is Protein dpy-30 homolog.